A 189-amino-acid polypeptide reads, in one-letter code: Potassium-transporting ATPase KdpC subunit (189 aa).

A helical membrane pass occupies residues 10–30 (ITLVFCVFFSVFYILILWLFA).

The protein belongs to the KdpC family. As to quaternary structure, the system is composed of three essential subunits: KdpA, KdpB and KdpC.

It is found in the cell inner membrane. Functionally, part of the high-affinity ATP-driven potassium transport (or Kdp) system, which catalyzes the hydrolysis of ATP coupled with the electrogenic transport of potassium into the cytoplasm. This subunit acts as a catalytic chaperone that increases the ATP-binding affinity of the ATP-hydrolyzing subunit KdpB by the formation of a transient KdpB/KdpC/ATP ternary complex. The sequence is that of Potassium-transporting ATPase KdpC subunit from Bacteroides thetaiotaomicron (strain ATCC 29148 / DSM 2079 / JCM 5827 / CCUG 10774 / NCTC 10582 / VPI-5482 / E50).